A 219-amino-acid polypeptide reads, in one-letter code: 7-cyano-7-deazaguanine synthase (219 aa).

Phe10–Leu20 serves as a coordination point for ATP. Zn(2+) is bound by residues Cys188, Cys197, Cys200, and Cys203.

Belongs to the QueC family. Zn(2+) is required as a cofactor.

The enzyme catalyses 7-carboxy-7-deazaguanine + NH4(+) + ATP = 7-cyano-7-deazaguanine + ADP + phosphate + H2O + H(+). Its pathway is purine metabolism; 7-cyano-7-deazaguanine biosynthesis. Functionally, catalyzes the ATP-dependent conversion of 7-carboxy-7-deazaguanine (CDG) to 7-cyano-7-deazaguanine (preQ(0)). This is 7-cyano-7-deazaguanine synthase from Bacteroides fragilis (strain ATCC 25285 / DSM 2151 / CCUG 4856 / JCM 11019 / LMG 10263 / NCTC 9343 / Onslow / VPI 2553 / EN-2).